The following is a 550-amino-acid chain: Zinc finger protein 426 (550 aa).

Residues 39-110 (VSFEDVIVDF…KIVFPEWKLQ (72 aa)) enclose the KRAB domain. C2H2-type zinc fingers lie at residues 219–241 (FECS…QRTH), 274–296 (HRCK…MRTH), 302–324 (YECK…GRTH), 330–352 (YVCS…VRSH), 358–380 (YGCK…IRTH), 386–408 (FVCV…LKLH), 414–436 (CECK…MRTH), 442–464 (YTCK…MRIH), 470–492 (YECK…ERTH), 498–522 (YECK…SHTH), and 528–550 (YKCQ…ERIH).

It localises to the nucleus. In terms of biological role, may be involved in transcriptional regulation. The polypeptide is Zinc finger protein 426 (Znf426) (Mus musculus (Mouse)).